A 474-amino-acid polypeptide reads, in one-letter code: MSSPVVTRFAPSPTGFLHIGGARTALFNWLYARRFGGRMLLRIEDTDRERSTQGAIDAILDGMRWLGLDWDGEVIYQFARAERHREVAESLLASGNAYHCYASAEELAQMRETARAEGRAPRYDGRWRDRDPSEAPEGVKPVIRLRAPSEGETVVEDAVQGRVTWANRDLDDLVLLRSDGTPTYMLAVVVDDHDMGVTQVIRGDDHLTNAARQSQIYRALGWDVPAMAHIPLIHGADGAKLSKRHGALGVEEYRDRGYLPAALRNYLVRLGWSHGDQEVFSTEEMIAAFDLKAIGRSAARFDFTKLESLNGLYIRGSADSVLVDAIDAILPARGPERGLPTALTPDLREKLVSAMPGLKERAKTLVELLDSAYYLYAPRPLALDAKAEALLAGDAPERLRALLPALEALPDWNAATTEAAVRQFADSQGVKLGQVAQPLRAALTGRATSPPVFDVLAVLGRDEALARLRDRLPA.

The 'HIGH' region motif lies at 11 to 21 (PSPTGFLHIGG). The span at 113–133 (TARAEGRAPRYDGRWRDRDPS) shows a compositional bias: basic and acidic residues. The interval 113 to 136 (TARAEGRAPRYDGRWRDRDPSEAP) is disordered. The 'KMSKS' region signature appears at 240 to 244 (KLSKR). An ATP-binding site is contributed by Lys-243.

Belongs to the class-I aminoacyl-tRNA synthetase family. Glutamate--tRNA ligase type 1 subfamily. Monomer.

The protein localises to the cytoplasm. The catalysed reaction is tRNA(Glu) + L-glutamate + ATP = L-glutamyl-tRNA(Glu) + AMP + diphosphate. Catalyzes the attachment of glutamate to tRNA(Glu) in a two-step reaction: glutamate is first activated by ATP to form Glu-AMP and then transferred to the acceptor end of tRNA(Glu). This Methylorubrum extorquens (strain PA1) (Methylobacterium extorquens) protein is Glutamate--tRNA ligase 1.